Reading from the N-terminus, the 344-residue chain is S-adenosylmethionine:tRNA ribosyltransferase-isomerase (344 aa).

The protein belongs to the QueA family. As to quaternary structure, monomer.

The protein resides in the cytoplasm. The catalysed reaction is 7-aminomethyl-7-carbaguanosine(34) in tRNA + S-adenosyl-L-methionine = epoxyqueuosine(34) in tRNA + adenine + L-methionine + 2 H(+). It functions in the pathway tRNA modification; tRNA-queuosine biosynthesis. In terms of biological role, transfers and isomerizes the ribose moiety from AdoMet to the 7-aminomethyl group of 7-deazaguanine (preQ1-tRNA) to give epoxyqueuosine (oQ-tRNA). The polypeptide is S-adenosylmethionine:tRNA ribosyltransferase-isomerase (Heliobacterium modesticaldum (strain ATCC 51547 / Ice1)).